The sequence spans 100 residues: Integration host factor subunit alpha (100 aa).

The interval 53 to 72 is disordered; it reads FDLRDKRQRPGRNPKTGEEI.

Belongs to the bacterial histone-like protein family. Heterodimer of an alpha and a beta chain.

Functionally, this protein is one of the two subunits of integration host factor, a specific DNA-binding protein that functions in genetic recombination as well as in transcriptional and translational control. The sequence is that of Integration host factor subunit alpha from Stutzerimonas stutzeri (strain A1501) (Pseudomonas stutzeri).